We begin with the raw amino-acid sequence, 98 residues long: DNA-binding protein Fis (98 aa).

The segment at residues 74-93 (QTRAATMMGINRGTLRKKLK) is a DNA-binding region (H-T-H motif).

Belongs to the transcriptional regulatory Fis family. As to quaternary structure, homodimer.

Activates ribosomal RNA transcription. Plays a direct role in upstream activation of rRNA promoters. The protein is DNA-binding protein Fis of Vibrio parahaemolyticus serotype O3:K6 (strain RIMD 2210633).